A 192-amino-acid chain; its full sequence is Imidazoleglycerol-phosphate dehydratase (192 aa).

Belongs to the imidazoleglycerol-phosphate dehydratase family.

It localises to the cytoplasm. It catalyses the reaction D-erythro-1-(imidazol-4-yl)glycerol 3-phosphate = 3-(imidazol-4-yl)-2-oxopropyl phosphate + H2O. It functions in the pathway amino-acid biosynthesis; L-histidine biosynthesis; L-histidine from 5-phospho-alpha-D-ribose 1-diphosphate: step 6/9. This chain is Imidazoleglycerol-phosphate dehydratase, found in Staphylococcus aureus (strain MRSA252).